We begin with the raw amino-acid sequence, 317 residues long: Melanocyte-stimulating hormone receptor (317 aa).

Residues 1–37 (MPVLGSQRRLLGSLNCTPPATFPLTLAPNRTGPQCLE) lie on the Extracellular side of the membrane. An N-linked (GlcNAc...) asparagine glycan is attached at asparagine 29. A helical membrane pass occupies residues 38 to 63 (VSIPDGLFLSLGLVSLVENVLVVAAI). At 64 to 72 (AKNRNLHSP) the chain is on the cytoplasmic side. The chain crosses the membrane as a helical span at residues 73-93 (MYYFICCLAMSDLLVSVSNVL). At 94–118 (ETAVMLLLEAGALAAQAAVVQQLDN) the chain is on the extracellular side. A helical transmembrane segment spans residues 119-140 (VIDVLICGSMVSSLCFLGAIAV). At 141 to 163 (DRYISIFYALRYHSVVTLPRAWR) the chain is on the cytoplasmic side. A helical transmembrane segment spans residues 164–183 (IIAAIWVASILTSLLFITYY). Residues 184–191 (NHTVVLLC) lie on the Extracellular side of the membrane. A helical membrane pass occupies residues 192 to 211 (LVGFFIAMLALMAVLYVHML). At 212-240 (ARACQHARGIARLQKRQRPIHQGFGLKGA) the chain is on the cytoplasmic side. Residues 241-266 (ATLTILLGVFFLCWGPFFLHLSLIVL) traverse the membrane as a helical segment. Topologically, residues 267–279 (CPQHPTCGCIFKN) are extracellular. Residues 280-300 (FNLFLALIICNAIVDPLIYAF) traverse the membrane as a helical segment. The Cytoplasmic portion of the chain corresponds to 301–317 (RSQELRKTLQEVLQCSW). Cysteine 315 is lipidated: S-palmitoyl cysteine.

The protein belongs to the G-protein coupled receptor 1 family. Interacts with MGRN1, but does not undergo MGRN1-mediated ubiquitination; this interaction competes with GNAS-binding and thus inhibits agonist-induced cAMP production. Interacts with OPN3; the interaction results in a decrease in MC1R-mediated cAMP signaling and ultimately a decrease in melanin production in melanocytes.

It is found in the cell membrane. Receptor for MSH (alpha, beta and gamma) and ACTH. The activity of this receptor is mediated by G proteins which activate adenylate cyclase. Mediates melanogenesis, the production of eumelanin (black/brown) and phaeomelanin (red/yellow), via regulation of cAMP signaling in melanocytes. The sequence is that of Melanocyte-stimulating hormone receptor (MC1R) from Dama dama (Fallow deer).